Consider the following 300-residue polypeptide: Ribosomal protein L11 methyltransferase (300 aa).

Residues threonine 152, glycine 173, aspartate 195, and asparagine 234 each coordinate S-adenosyl-L-methionine.

Belongs to the methyltransferase superfamily. PrmA family.

Its subcellular location is the cytoplasm. It carries out the reaction L-lysyl-[protein] + 3 S-adenosyl-L-methionine = N(6),N(6),N(6)-trimethyl-L-lysyl-[protein] + 3 S-adenosyl-L-homocysteine + 3 H(+). Functionally, methylates ribosomal protein L11. The chain is Ribosomal protein L11 methyltransferase from Cupriavidus necator (strain ATCC 17699 / DSM 428 / KCTC 22496 / NCIMB 10442 / H16 / Stanier 337) (Ralstonia eutropha).